Consider the following 690-residue polypeptide: Protein arginine N-methyltransferase 7 (690 aa).

SAM-dependent MTase PRMT-type domains lie at 14 to 357 and 366 to 690; these read ENSW…YSLW and AKSV…QKKP.

The protein belongs to the class I-like SAM-binding methyltransferase superfamily. Protein arginine N-methyltransferase family. PRMT7 subfamily.

Essential arginine methyltransferase that can both catalyze the formation of omega-N monomethylarginine (MMA) and symmetrical dimethylarginine (sDMA). Specifically mediates the symmetrical dimethylation of arginine residues in the small nuclear ribonucleoproteins SmD1 and SmD3. The chain is Protein arginine N-methyltransferase 7 (Art7) from Drosophila ananassae (Fruit fly).